The chain runs to 916 residues: Translation initiation factor IF-2 (916 aa).

Positions 151–191 (NLDEQQRLAESDRARDEAIQRKRDEEQAAKDRVEAERKAAE) are enriched in basic and acidic residues. Disordered stretches follow at residues 151–262 (NLDE…SHVM) and 280–328 (HLSA…ERPT). 2 stretches are compositionally biased toward low complexity: residues 192–243 (EAAA…ATPA) and 293–305 (RGKP…SSSS). The region spanning 415–584 (SRPPVVTIMG…SLQAEVLELK (170 aa)) is the tr-type G domain. Residues 424-431 (GHVDHGKT) are G1. 424 to 431 (GHVDHGKT) contacts GTP. The G2 stretch occupies residues 449–453 (GITQH). Residues 470 to 473 (DTPG) are G3. Residues 470 to 474 (DTPGH) and 524 to 527 (NKID) contribute to the GTP site. The G4 stretch occupies residues 524-527 (NKID). A G5 region spans residues 560-562 (SAK).

The protein belongs to the TRAFAC class translation factor GTPase superfamily. Classic translation factor GTPase family. IF-2 subfamily.

It localises to the cytoplasm. One of the essential components for the initiation of protein synthesis. Protects formylmethionyl-tRNA from spontaneous hydrolysis and promotes its binding to the 30S ribosomal subunits. Also involved in the hydrolysis of GTP during the formation of the 70S ribosomal complex. In Xanthomonas campestris pv. campestris (strain ATCC 33913 / DSM 3586 / NCPPB 528 / LMG 568 / P 25), this protein is Translation initiation factor IF-2.